The primary structure comprises 176 residues: Flavodoxin 1 (176 aa).

The Flavodoxin-like domain maps to 4–165 (TGIFFGSDTG…RVEKWVKQVS (162 aa)).

This sequence belongs to the flavodoxin family. The cofactor is FMN.

In terms of biological role, low-potential electron donor to a number of redox enzymes (Potential). Involved in the reactivation of inactive cob(II)alamin in methionine synthase. The protein is Flavodoxin 1 (fldA) of Salmonella typhimurium (strain LT2 / SGSC1412 / ATCC 700720).